The chain runs to 569 residues: CTP synthase (569 aa).

Positions 1–276 (MNQATPTKHV…DAYLVRRLDL (276 aa)) are amidoligase domain. Position 18 (S18) interacts with CTP. S18 contributes to the UTP binding site. Residues 19–24 (SLGKGL) and D76 contribute to the ATP site. Residues D76 and E150 each contribute to the Mg(2+) site. Residues 157–159 (DIE), 197–202 (KTKPTQ), and K233 contribute to the CTP site. UTP is bound by residues 197 to 202 (KTKPTQ) and K233. Residues 301–550 (TVALVGKYVD…VGAAIERQRE (250 aa)) form the Glutamine amidotransferase type-1 domain. G364 serves as a coordination point for L-glutamine. C391 functions as the Nucleophile; for glutamine hydrolysis in the catalytic mechanism. Residues 392 to 395 (LGLQ), E415, and R476 contribute to the L-glutamine site. Residues H523 and E525 contribute to the active site.

Belongs to the CTP synthase family. Homotetramer.

The catalysed reaction is UTP + L-glutamine + ATP + H2O = CTP + L-glutamate + ADP + phosphate + 2 H(+). The enzyme catalyses L-glutamine + H2O = L-glutamate + NH4(+). It catalyses the reaction UTP + NH4(+) + ATP = CTP + ADP + phosphate + 2 H(+). The protein operates within pyrimidine metabolism; CTP biosynthesis via de novo pathway; CTP from UDP: step 2/2. Its activity is regulated as follows. Allosterically activated by GTP, when glutamine is the substrate; GTP has no effect on the reaction when ammonia is the substrate. The allosteric effector GTP functions by stabilizing the protein conformation that binds the tetrahedral intermediate(s) formed during glutamine hydrolysis. Inhibited by the product CTP, via allosteric rather than competitive inhibition. In terms of biological role, catalyzes the ATP-dependent amination of UTP to CTP with either L-glutamine or ammonia as the source of nitrogen. Regulates intracellular CTP levels through interactions with the four ribonucleotide triphosphates. The polypeptide is CTP synthase (Nocardioides sp. (strain ATCC BAA-499 / JS614)).